Reading from the N-terminus, the 492-residue chain is Glycerol kinase 1 (492 aa).

ADP is bound at residue threonine 10. Residues threonine 10 and serine 11 each coordinate ATP. Residue threonine 10 coordinates sn-glycerol 3-phosphate. ADP is bound at residue lysine 14. Sn-glycerol 3-phosphate-binding residues include arginine 80, glutamate 81, tyrosine 132, and aspartate 241. 4 residues coordinate glycerol: arginine 80, glutamate 81, tyrosine 132, and aspartate 241. 4 residues coordinate ADP: threonine 263, glycine 306, glycine 407, and asparagine 411. 3 residues coordinate ATP: threonine 263, glycine 306, and glycine 407.

Belongs to the FGGY kinase family.

The enzyme catalyses glycerol + ATP = sn-glycerol 3-phosphate + ADP + H(+). It participates in polyol metabolism; glycerol degradation via glycerol kinase pathway; sn-glycerol 3-phosphate from glycerol: step 1/1. Its activity is regulated as follows. Inhibited by fructose 1,6-bisphosphate (FBP). Key enzyme in the regulation of glycerol uptake and metabolism. Catalyzes the phosphorylation of glycerol to yield sn-glycerol 3-phosphate. The chain is Glycerol kinase 1 from Thermotoga maritima (strain ATCC 43589 / DSM 3109 / JCM 10099 / NBRC 100826 / MSB8).